We begin with the raw amino-acid sequence, 1179 residues long: Stress response protein NST1 (1179 aa).

Disordered stretches follow at residues 1-64, 147-189, 255-351, 537-619, 660-819, 928-947, and 957-997; these read MSET…LNDP, TVNT…SNSS, KRQQ…NHSH, AAWI…EEEK, EAEE…DISQ, SSQA…PQLS, and SLSQ…VWNP. The span at 10–22 shows a compositional bias: basic and acidic residues; the sequence is DVSKFKNGDDVHF. The segment covering 24-38 has biased composition (polar residues); that stretch reads YNSTTNDQTINSTNV. Over residues 39–53 the composition is skewed to basic residues; sequence QKKKKKKKSKNKHKG. A compositionally biased stretch (low complexity) spans 149–178; it reads NTSNNHQNNSNTQGGSTSTSGGALNGSSTN. Residues 262 to 278 show a composition bias toward basic and acidic residues; it reads YKQERDAHHDHHNHEPG. The segment covering 282–299 has biased composition (low complexity); that stretch reads SDTGSSGDYDGSTQQDQQ. The span at 300-347 shows a compositional bias: basic and acidic residues; sequence HQYEHEIEHAFQEDEHEDECGHKNDHSHSHSHSHTENHNHSHSYDPNH. A compositionally biased stretch (acidic residues) spans 564-616; the sequence is ELEEELNDEYDEVDEDDDEGEEEGEEEEEELDDEEFEEDEEEDASDTESEISE. Positions 648–810 form a coiled coil; that stretch reads SQDRTRTLIE…KSAKKQDHKE (163 aa). Composition is skewed to basic and acidic residues over residues 663–681 and 690–812; these read ENAK…EKAK and AKEE…KETG. A compositionally biased stretch (low complexity) spans 957–977; that stretch reads SLSQNSLSSNANENLNTNPLN.

Belongs to the NST1 family.

Its subcellular location is the cytoplasm. Functionally, may act as a negative regulator of salt tolerance. This chain is Stress response protein NST1 (NST1), found in Debaryomyces hansenii (strain ATCC 36239 / CBS 767 / BCRC 21394 / JCM 1990 / NBRC 0083 / IGC 2968) (Yeast).